The chain runs to 658 residues: Threonine--tRNA ligase (658 aa).

The TGS domain occupies 1–64; that stretch reads MLNSVSLTFP…GKSGKVEIIT (64 aa). Residues 246-549 are catalytic; it reads DHRKLGREMD…LIENYSGHFP (304 aa). Residues Cys343, His394, and His526 each coordinate Zn(2+).

This sequence belongs to the class-II aminoacyl-tRNA synthetase family. Homodimer. It depends on Zn(2+) as a cofactor.

Its subcellular location is the cytoplasm. It catalyses the reaction tRNA(Thr) + L-threonine + ATP = L-threonyl-tRNA(Thr) + AMP + diphosphate + H(+). Functionally, catalyzes the attachment of threonine to tRNA(Thr) in a two-step reaction: L-threonine is first activated by ATP to form Thr-AMP and then transferred to the acceptor end of tRNA(Thr). Also edits incorrectly charged L-seryl-tRNA(Thr). This Mesorhizobium japonicum (strain LMG 29417 / CECT 9101 / MAFF 303099) (Mesorhizobium loti (strain MAFF 303099)) protein is Threonine--tRNA ligase.